The sequence spans 199 residues: NAD(P)H dehydrogenase (quinone) (199 aa).

A Flavodoxin-like domain is found at 4 to 190; it reads VLVLYYSTYG…AGARHQGELV (187 aa). FMN is bound by residues 10-15 and 78-80; these read STYGHL and TRF. Y12 contributes to the NAD(+) binding site. W98 is a binding site for substrate. Residues 113–119 and H134 contribute to the FMN site; that span reads STATQHG.

Belongs to the WrbA family. FMN serves as cofactor.

It carries out the reaction a quinone + NADH + H(+) = a quinol + NAD(+). The enzyme catalyses a quinone + NADPH + H(+) = a quinol + NADP(+). This is NAD(P)H dehydrogenase (quinone) from Azorhizobium caulinodans (strain ATCC 43989 / DSM 5975 / JCM 20966 / LMG 6465 / NBRC 14845 / NCIMB 13405 / ORS 571).